The sequence spans 248 residues: Phosphoribosyl isomerase A (248 aa).

The active-site Proton acceptor is the D14. Residue D133 is the Proton donor of the active site.

This sequence belongs to the HisA/HisF family.

It localises to the cytoplasm. The catalysed reaction is 1-(5-phospho-beta-D-ribosyl)-5-[(5-phospho-beta-D-ribosylamino)methylideneamino]imidazole-4-carboxamide = 5-[(5-phospho-1-deoxy-D-ribulos-1-ylimino)methylamino]-1-(5-phospho-beta-D-ribosyl)imidazole-4-carboxamide. It catalyses the reaction N-(5-phospho-beta-D-ribosyl)anthranilate = 1-(2-carboxyphenylamino)-1-deoxy-D-ribulose 5-phosphate. The protein operates within amino-acid biosynthesis; L-histidine biosynthesis; L-histidine from 5-phospho-alpha-D-ribose 1-diphosphate: step 4/9. It functions in the pathway amino-acid biosynthesis; L-tryptophan biosynthesis; L-tryptophan from chorismate: step 3/5. Functionally, involved in both the histidine and tryptophan biosynthetic pathways. The polypeptide is Phosphoribosyl isomerase A (Mycobacterium sp. (strain JLS)).